The primary structure comprises 660 residues: Protein FAM161A (660 aa).

Coiled coils occupy residues E93–K120 and Y296–A320. A required for interaction with CFAP418 region spans residues Q341–Q525. Residues K468 and K484 each participate in a glycyl lysine isopeptide (Lys-Gly) (interchain with G-Cter in SUMO2) cross-link. Positions G522–R552 form a coiled coil. The tract at residues K605–H660 is disordered. The segment covering S606–R623 has biased composition (basic and acidic residues). The segment covering E645–H660 has biased composition (acidic residues).

It belongs to the FAM161 family. As to quaternary structure, interacts (via central region) with CFAP418 (via N-terminus); the interaction is direct. Interacts (via C-terminus) with microtubules. Interacts with LCA5. Interacts with CEP290. Interacts with SDCCAG8. Interacts with FAM161B. Interacts with POC1B. Interacts with CEP78. Forms a microtubule-associated complex with POC5, CETN2 and POC1B. Interacts with CCDC15. As to expression, isoform 1 and isoform 3 are widely expressed with highest levels in retina and testis, with isoform 1 being the most abundant in all tissues tested.

It is found in the cytoplasm. It localises to the cytoskeleton. The protein localises to the cilium basal body. The protein resides in the cell projection. Its subcellular location is the cilium. It is found in the microtubule organizing center. It localises to the centrosome. The protein localises to the centriole. In terms of biological role, involved in ciliogenesis. This is Protein FAM161A (FAM161A) from Homo sapiens (Human).